We begin with the raw amino-acid sequence, 374 residues long: Alginate lyase (374 aa).

Residues 1–26 (MRNPKLKNLLAPTLLSLAMFAGATQA) form the signal peptide. Substrate contacts are provided by residues 67–68 (SK), 140–141 (HT), and Y258.

This sequence belongs to the polysaccharide lyase 5 family.

It localises to the periplasm. The enzyme catalyses Eliminative cleavage of alginate to give oligosaccharides with 4-deoxy-alpha-L-erythro-hex-4-enuronosyl groups at their non-reducing ends and beta-D-mannuronate at their reducing end.. Functionally, catalyzes the depolymerization of alginate by cleaving the beta-1,4 glycosidic bond between two adjacent sugar residues via a beta-elimination mechanism. May serve to degrade mislocalized alginate that is trapped in the periplasmic space. This is Alginate lyase from Cobetia marina (Deleya marina).